The sequence spans 322 residues: tRNA U34 carboxymethyltransferase (322 aa).

Carboxy-S-adenosyl-L-methionine-binding positions include Lys91, Trp105, Lys110, Gly129, 179–180 (LE), Met195, Tyr199, and Arg314.

This sequence belongs to the class I-like SAM-binding methyltransferase superfamily. CmoB family. As to quaternary structure, homotetramer.

The catalysed reaction is carboxy-S-adenosyl-L-methionine + 5-hydroxyuridine(34) in tRNA = 5-carboxymethoxyuridine(34) in tRNA + S-adenosyl-L-homocysteine + H(+). Functionally, catalyzes carboxymethyl transfer from carboxy-S-adenosyl-L-methionine (Cx-SAM) to 5-hydroxyuridine (ho5U) to form 5-carboxymethoxyuridine (cmo5U) at position 34 in tRNAs. The polypeptide is tRNA U34 carboxymethyltransferase (Pseudomonas paraeruginosa (strain DSM 24068 / PA7) (Pseudomonas aeruginosa (strain PA7))).